The sequence spans 109 residues: Small ribosomal subunit protein bS6 (109 aa).

Belongs to the bacterial ribosomal protein bS6 family.

Functionally, binds together with bS18 to 16S ribosomal RNA. This is Small ribosomal subunit protein bS6 from Ehrlichia ruminantium (strain Gardel).